The sequence spans 202 residues: Proteasome subunit beta 1 (202 aa).

Position 1 (Met1) is a propeptide, removed in mature form; by autocatalysis. The Nucleophile role is filled by Thr2.

The protein belongs to the peptidase T1B family. The 20S proteasome core is composed of 14 alpha and 14 beta subunits that assemble into four stacked heptameric rings, resulting in a barrel-shaped structure. The two inner rings, each composed of seven catalytic beta subunits, are sandwiched by two outer rings, each composed of seven alpha subunits. The catalytic chamber with the active sites is on the inside of the barrel. Has a gated structure, the ends of the cylinder being occluded by the N-termini of the alpha-subunits. Is capped at one or both ends by the proteasome regulatory ATPase, PAN.

The protein localises to the cytoplasm. It carries out the reaction Cleavage of peptide bonds with very broad specificity.. Its activity is regulated as follows. The formation of the proteasomal ATPase PAN-20S proteasome complex, via the docking of the C-termini of PAN into the intersubunit pockets in the alpha-rings, triggers opening of the gate for substrate entry. Interconversion between the open-gate and close-gate conformations leads to a dynamic regulation of the 20S proteasome proteolysis activity. In terms of biological role, component of the proteasome core, a large protease complex with broad specificity involved in protein degradation. The protein is Proteasome subunit beta 1 of Pyrobaculum aerophilum (strain ATCC 51768 / DSM 7523 / JCM 9630 / CIP 104966 / NBRC 100827 / IM2).